Consider the following 372-residue polypeptide: Chorismate synthase (372 aa).

Residues R48 and R54 each coordinate NADP(+). Residues 125 to 127 (RSS), 238 to 239 (NA), G278, 293 to 297 (KPTSS), and R319 contribute to the FMN site.

It belongs to the chorismate synthase family. Homotetramer. Requires FMNH2 as cofactor.

The catalysed reaction is 5-O-(1-carboxyvinyl)-3-phosphoshikimate = chorismate + phosphate. It functions in the pathway metabolic intermediate biosynthesis; chorismate biosynthesis; chorismate from D-erythrose 4-phosphate and phosphoenolpyruvate: step 7/7. Its function is as follows. Catalyzes the anti-1,4-elimination of the C-3 phosphate and the C-6 proR hydrogen from 5-enolpyruvylshikimate-3-phosphate (EPSP) to yield chorismate, which is the branch point compound that serves as the starting substrate for the three terminal pathways of aromatic amino acid biosynthesis. This reaction introduces a second double bond into the aromatic ring system. This is Chorismate synthase from Xylella fastidiosa (strain 9a5c).